Reading from the N-terminus, the 396-residue chain is Gap junction gamma-1 protein (396 aa).

The Cytoplasmic segment spans residues 1 to 22 (MSWSFLTRLLEEIHNHSTFVGK). Residues 23-45 (IWLTVLIVFRIVLTAVGGESIYY) form a helical membrane-spanning segment. Topologically, residues 46-75 (DEQSKFVCNTEQPGCENVCYDAFAPLSHVR) are extracellular. The chain crosses the membrane as a helical span at residues 76-95 (FWVFQIILVATPSVMYLGYA). Residues 96-175 (IHKIAKMEHG…RRIREDGLMK (80 aa)) are Cytoplasmic-facing. The disordered stretch occupies residues 145 to 165 (ELESDKENKEQSQPKPKHDGR). Residues 147 to 156 (ESDKENKEQS) show a composition bias toward basic and acidic residues. A helical transmembrane segment spans residues 176-198 (IYVLQLLARTVFEVGFLIGQYFL). The Extracellular portion of the chain corresponds to 199–228 (YGFQVHPFYVCSRLPCPHKIDCFISRPTEK). A helical transmembrane segment spans residues 229-248 (TIFLLIMYGVTGLCLLLNIW). Residues 249–396 (EMLHLGFGTI…SGDGKTSVWI (148 aa)) are Cytoplasmic-facing. The interval 353–396 (VQAYSHQNNPHGPREKKAKVGSKAGSNKSTASSKSGDGKTSVWI) is disordered. Positions 376–387 (AGSNKSTASSKS) are enriched in polar residues.

The protein belongs to the connexin family. Gamma-type subfamily. In terms of assembly, a connexon is composed of a hexamer of connexins. Interacts with CNST.

It localises to the cell membrane. The protein resides in the cell junction. Its subcellular location is the gap junction. In terms of biological role, one gap junction consists of a cluster of closely packed pairs of transmembrane channels, the connexons, through which materials of low MW diffuse from one cell to a neighboring cell. The sequence is that of Gap junction gamma-1 protein (GJC1) from Homo sapiens (Human).